The chain runs to 237 residues: Large ribosomal subunit protein uL2 (237 aa).

Residues 1-11 (MGKRIISQNRG) show a composition bias toward polar residues. Disordered stretches follow at residues 1–20 (MGKR…YRAP) and 201–237 (FGGG…GVRR).

The protein belongs to the universal ribosomal protein uL2 family. As to quaternary structure, part of the 50S ribosomal subunit. Forms a bridge to the 30S subunit in the 70S ribosome.

Its function is as follows. One of the primary rRNA binding proteins. Required for association of the 30S and 50S subunits to form the 70S ribosome, for tRNA binding and peptide bond formation. It has been suggested to have peptidyltransferase activity; this is somewhat controversial. Makes several contacts with the 16S rRNA in the 70S ribosome. The sequence is that of Large ribosomal subunit protein uL2 from Archaeoglobus fulgidus (strain ATCC 49558 / DSM 4304 / JCM 9628 / NBRC 100126 / VC-16).